The sequence spans 116 residues: Ribosome-binding factor A (116 aa).

Belongs to the RbfA family. As to quaternary structure, monomer. Binds 30S ribosomal subunits, but not 50S ribosomal subunits or 70S ribosomes.

It is found in the cytoplasm. One of several proteins that assist in the late maturation steps of the functional core of the 30S ribosomal subunit. Associates with free 30S ribosomal subunits (but not with 30S subunits that are part of 70S ribosomes or polysomes). Required for efficient processing of 16S rRNA. May interact with the 5'-terminal helix region of 16S rRNA. This is Ribosome-binding factor A from Staphylococcus epidermidis (strain ATCC 35984 / DSM 28319 / BCRC 17069 / CCUG 31568 / BM 3577 / RP62A).